We begin with the raw amino-acid sequence, 400 residues long: Elongation factor Tu (400 aa).

Residues 10-209 form the tr-type G domain; that stretch reads KPHVNIGTIG…VVDKYIPTPQ (200 aa). Residues 19–26 are G1; the sequence is GHVDHGKT. Residue 19–26 coordinates GTP; that stretch reads GHVDHGKT. T26 lines the Mg(2+) pocket. Residues 60–64 form a G2 region; sequence GITIN. The G3 stretch occupies residues 81 to 84; sequence DCPG. Residues 81–85 and 136–139 contribute to the GTP site; these read DCPGH and NKVD. The G4 stretch occupies residues 136–139; sequence NKVD. The G5 stretch occupies residues 174 to 176; the sequence is SAL.

This sequence belongs to the TRAFAC class translation factor GTPase superfamily. Classic translation factor GTPase family. EF-Tu/EF-1A subfamily. As to quaternary structure, monomer.

It is found in the cytoplasm. The catalysed reaction is GTP + H2O = GDP + phosphate + H(+). Its function is as follows. GTP hydrolase that promotes the GTP-dependent binding of aminoacyl-tRNA to the A-site of ribosomes during protein biosynthesis. This chain is Elongation factor Tu, found in Caldicellulosiruptor saccharolyticus (strain ATCC 43494 / DSM 8903 / Tp8T 6331).